The following is a 299-amino-acid chain: 4-diphosphocytidyl-2-C-methyl-D-erythritol kinase (299 aa).

Lysine 11 is a catalytic residue. Residue 94-104 (PQGGGLGGGSS) coordinates ATP. Aspartate 136 is an active-site residue.

Belongs to the GHMP kinase family. IspE subfamily.

The enzyme catalyses 4-CDP-2-C-methyl-D-erythritol + ATP = 4-CDP-2-C-methyl-D-erythritol 2-phosphate + ADP + H(+). It functions in the pathway isoprenoid biosynthesis; isopentenyl diphosphate biosynthesis via DXP pathway; isopentenyl diphosphate from 1-deoxy-D-xylulose 5-phosphate: step 3/6. In terms of biological role, catalyzes the phosphorylation of the position 2 hydroxy group of 4-diphosphocytidyl-2C-methyl-D-erythritol. The sequence is that of 4-diphosphocytidyl-2-C-methyl-D-erythritol kinase from Bordetella pertussis (strain Tohama I / ATCC BAA-589 / NCTC 13251).